We begin with the raw amino-acid sequence, 1855 residues long: Chitin synthase 5 (1855 aa).

The Myosin motor domain maps to Met-1–Asp-778. Gly-95–Thr-102 provides a ligand contact to ATP. Asn-221, Asn-520, and Asn-558 each carry an N-linked (GlcNAc...) asparagine glycan. The interval Ala-585–Ala-650 is disordered. The interval Leu-658 to Asp-682 is actin-binding. Asn-662 is a glycosylation site (N-linked (GlcNAc...) asparagine). 2 consecutive transmembrane segments (helical) span residues Trp-887 to Gly-907 and Val-922 to Phe-942. A Cytochrome b5 heme-binding domain is found at Gln-950–Phe-1008. Residues Asn-1037 and Asn-1061 are each glycosylated (N-linked (GlcNAc...) asparagine). A helical membrane pass occupies residues Ile-1199–Leu-1219. 3 N-linked (GlcNAc...) asparagine glycosylation sites follow: Asn-1422, Asn-1456, and Asn-1562. 3 helical membrane passes run Phe-1587–Val-1607, Ala-1621–Val-1641, and Trp-1650–Phe-1670. N-linked (GlcNAc...) asparagine glycosylation is found at Asn-1755 and Asn-1767. One can recognise a DEK-C domain in the interval Met-1797–Ser-1852.

The protein in the N-terminal section; belongs to the TRAFAC class myosin-kinesin ATPase superfamily. Myosin family. In the C-terminal section; belongs to the chitin synthase family. Class V subfamily.

The protein resides in the apical cell membrane. It localises to the cell septum. It is found in the cell tip. It carries out the reaction [(1-&gt;4)-N-acetyl-beta-D-glucosaminyl](n) + UDP-N-acetyl-alpha-D-glucosamine = [(1-&gt;4)-N-acetyl-beta-D-glucosaminyl](n+1) + UDP + H(+). Polymerizes chitin, a structural polymer of the cell wall and septum, by transferring the sugar moiety of UDP-GlcNAc to the non-reducing end of the growing chitin polymer. The polypeptide is Chitin synthase 5 (Zymoseptoria tritici (strain CBS 115943 / IPO323) (Speckled leaf blotch fungus)).